The chain runs to 238 residues: DNA repair protein RecO (238 aa).

This sequence belongs to the RecO family.

Functionally, involved in DNA repair and RecF pathway recombination. The polypeptide is DNA repair protein RecO (Flavobacterium psychrophilum (strain ATCC 49511 / DSM 21280 / CIP 103535 / JIP02/86)).